Here is a 459-residue protein sequence, read N- to C-terminus: 4,4'-diaponeurosporen-aldehyde dehydrogenase (459 aa).

Residues 114–115 and 188–189 each bind NAD(+); these read FN and GS. The active-site Proton acceptor is Glu-210. Met-211 contributes to the NAD(+) binding site. Residue Cys-244 is the Nucleophile of the active site. Glu-336 is an NAD(+) binding site.

The protein belongs to the aldehyde dehydrogenase family.

It catalyses the reaction 4,4'-diaponeurosporenal + NAD(+) + H2O = 4,4'-diaponeurosporenoate + NADH + 2 H(+). It participates in carotenoid biosynthesis; staphyloxanthin biosynthesis; staphyloxanthin from farnesyl diphosphate. In terms of biological role, involved in the biosynthesis of the yellow-orange carotenoid staphyloxanthin, which plays a role in the virulence via its protective function against oxidative stress. Catalyzes the oxidation of 4,4'-diaponeurosporen-4-al to yield 4,4'-diaponeurosporenoic acid. This chain is 4,4'-diaponeurosporen-aldehyde dehydrogenase, found in Staphylococcus aureus (strain NCTC 8325 / PS 47).